A 202-amino-acid polypeptide reads, in one-letter code: Large ribosomal subunit protein mL40 (202 aa).

The interval 42-79 is disordered; it reads IQHQQTASYASKGKSGPPAGMFSGQKAGSKKSKGPKQV.

This sequence belongs to the mitochondrion-specific ribosomal protein mL40 family. Component of the mitochondrial large ribosomal subunit (mt-LSU). Mature N.crassa 74S mitochondrial ribosomes consist of a small (37S) and a large (54S) subunit. The 37S small subunit contains a 16S ribosomal RNA (16S mt-rRNA) and 32 different proteins. The 54S large subunit contains a 23S rRNA (23S mt-rRNA) and 42 different proteins. mL40 is binding to NAD.

It localises to the mitochondrion. Component of the mitochondrial ribosome (mitoribosome), a dedicated translation machinery responsible for the synthesis of mitochondrial genome-encoded proteins, including at least some of the essential transmembrane subunits of the mitochondrial respiratory chain. The mitoribosomes are attached to the mitochondrial inner membrane and translation products are cotranslationally integrated into the membrane. The protein is Large ribosomal subunit protein mL40 (mrpl28) of Neurospora crassa (strain ATCC 24698 / 74-OR23-1A / CBS 708.71 / DSM 1257 / FGSC 987).